Consider the following 364-residue polypeptide: MRIVVSGGGTGGHIYPALAMIREIERRTPCEVLYIGTENGLEADIVRRAGIPFESIEISGIRRSLSFENVKTGFRFLKSVVRVRKLLRDFQPDIVVGTGGFVCGPVLYTAAKMGYKTLVHEQNSLPGITNKFLARYVDRVALSFKGSGHHFGKNKGKTILIGNPRASEVAMLQIDPVEEKRKYGFEQDRPLIVVYGGSRGAPAINKAVVDMIPKLTETDWSLLFVTGQVHYEDIQAQLGTLPDRIQLRPFIYDLPLILKASQLVISRSGASTLAELTTLGLPSILIPSPYVTENHQEVNASSLVETGASLLIRESELTGDRLFDACTKAIADQADMSKASLALGMPNAASDLVDELLRLIQRKN.

Residues 10–12, asparagine 123, serine 198, isoleucine 251, and glutamine 296 each bind UDP-N-acetyl-alpha-D-glucosamine; that span reads TGG.

Belongs to the glycosyltransferase 28 family. MurG subfamily.

It localises to the cell membrane. It catalyses the reaction di-trans,octa-cis-undecaprenyl diphospho-N-acetyl-alpha-D-muramoyl-L-alanyl-D-glutamyl-meso-2,6-diaminopimeloyl-D-alanyl-D-alanine + UDP-N-acetyl-alpha-D-glucosamine = di-trans,octa-cis-undecaprenyl diphospho-[N-acetyl-alpha-D-glucosaminyl-(1-&gt;4)]-N-acetyl-alpha-D-muramoyl-L-alanyl-D-glutamyl-meso-2,6-diaminopimeloyl-D-alanyl-D-alanine + UDP + H(+). The protein operates within cell wall biogenesis; peptidoglycan biosynthesis. Its function is as follows. Cell wall formation. Catalyzes the transfer of a GlcNAc subunit on undecaprenyl-pyrophosphoryl-MurNAc-pentapeptide (lipid intermediate I) to form undecaprenyl-pyrophosphoryl-MurNAc-(pentapeptide)GlcNAc (lipid intermediate II). This is UDP-N-acetylglucosamine--N-acetylmuramyl-(pentapeptide) pyrophosphoryl-undecaprenol N-acetylglucosamine transferase from Exiguobacterium sibiricum (strain DSM 17290 / CCUG 55495 / CIP 109462 / JCM 13490 / 255-15).